A 672-amino-acid polypeptide reads, in one-letter code: DNA ligase (672 aa).

NAD(+)-binding positions include 32 to 36 (DAEYD), 81 to 82 (SL), and Glu-113. The N6-AMP-lysine intermediate role is filled by Lys-115. Positions 136, 173, 290, and 314 each coordinate NAD(+). The Zn(2+) site is built by Cys-408, Cys-411, Cys-426, and Cys-432. The BRCT domain maps to 594–672 (EIDSPFAGKT…EAEMLRLLGE (79 aa)).

Belongs to the NAD-dependent DNA ligase family. LigA subfamily. It depends on Mg(2+) as a cofactor. Requires Mn(2+) as cofactor.

It catalyses the reaction NAD(+) + (deoxyribonucleotide)n-3'-hydroxyl + 5'-phospho-(deoxyribonucleotide)m = (deoxyribonucleotide)n+m + AMP + beta-nicotinamide D-nucleotide.. In terms of biological role, DNA ligase that catalyzes the formation of phosphodiester linkages between 5'-phosphoryl and 3'-hydroxyl groups in double-stranded DNA using NAD as a coenzyme and as the energy source for the reaction. It is essential for DNA replication and repair of damaged DNA. This Cronobacter sakazakii (strain ATCC BAA-894) (Enterobacter sakazakii) protein is DNA ligase.